Reading from the N-terminus, the 147-residue chain is Small ribosomal subunit protein uS12 (147 aa).

This sequence belongs to the universal ribosomal protein uS12 family. Part of the 30S ribosomal subunit.

Functionally, with S4 and S5 plays an important role in translational accuracy. Located at the interface of the 30S and 50S subunits. The polypeptide is Small ribosomal subunit protein uS12 (Staphylothermus marinus (strain ATCC 43588 / DSM 3639 / JCM 9404 / F1)).